Consider the following 1077-residue polypeptide: TSC22 domain family protein 1 (1077 aa).

The required for interaction with TGFBR1 and promotion of TGF-beta signaling stretch occupies residues Met1–Leu98. Disordered stretches follow at residues Met22–Gln112, Ile125–Ser283, Gln458–Ser492, Ser842–Val874, and Gln909–Ser947. The span at Phe58–Ala70 shows a compositional bias: pro residues. Over residues Ser84 to Gln96 the composition is skewed to low complexity. Residues Glu133–Asp142 show a composition bias toward acidic residues. Residues His216 to Ser240 show a composition bias toward basic residues. Ser263 carries the post-translational modification Phosphoserine. The span at Thr471–Ser489 shows a compositional bias: low complexity. Positions Val852–Val874 are enriched in polar residues. A compositionally biased stretch (low complexity) spans Met933–Ser947. The interval Leu1010–Leu1031 is leucine-zipper. A disordered region spans residues Gln1042 to Ala1077. Low complexity predominate over residues Gln1048–Ala1077.

Belongs to the TSC-22/Dip/Bun family. As to quaternary structure, forms homodimers. Forms heterodimers. Component of a complex composed of TSC22D1 (via N-terminus), TGFBR1 and TGFBR2; the interaction between TSC22D1 and TGFBR1 is inhibited by SMAD7 and promoted by TGFB1. Interacts with SMAD7; the interaction requires TGF-beta and the interaction is inhibited by TGFBR1. Interacts with TPT1/fortilin; interaction results in the destabilization of TSC22D1 protein and prevents TSC22D1-mediated apoptosis. Interacts with SMAD4 (via N-terminus). Interacts with ACVRL1/ALK1, ACVR1/ALK2, BMPR1A/ALK3, ACVR1B/ALK4, BMPR1B/ALK6, ACVR2A/ACTRII, and BMPR2. Interacts with SMAD6. Interacts with TFE3; the interaction is enhanced in the presence of TGF-beta. Forms a heterodimer with TSC22D4/THG1. In terms of assembly, forms a heterodimer with TSC22D4/THG1. Interacts with histone H1-2. Interacts with GNL3. In terms of tissue distribution, expressed in bone marrow cells (at protein level). Expressed in T-cells. Expressed in the brain. Expressed in the myoepithelial cells of the mammary gland ducts and alveoli, expression is consistent throughout pregnancy, lactation and involution (at protein level). Expressed in the cortex, medulla and papilla of the kidney. As to expression, expressed in the myoepithelial cells of the mammary gland, expression significantly increases in the secretory luminal epithelium of the mammary gland at the initiation of involution, with levels decreasing from day 3 of involution onwards (at protein level). Expressed in the cortex, medulla and papilla of the kidney.

Its subcellular location is the cytoplasm. It localises to the nucleus. The protein resides in the cell membrane. The protein localises to the mitochondrion. Functionally, transcriptional repressor. Acts on the C-type natriuretic peptide (CNP) promoter. Acts to promote CASP3-mediated apoptosis. Positively regulates TGF-beta signaling by interacting with SMAD7 which inhibits binding of SMAD7 to TGFBR1, preventing recruitment of SMURF ubiquitin ligases to TGFBR1 and inhibiting SMURF-mediated ubiquitination and degradation of TGFBR1. Contributes to enhancement of TGF-beta signaling by binding to and modulating the transcription activator activity of SMAD4. Promotes TGF-beta-induced transcription of COL1A2; via its interaction with TFE3 at E-boxes in the gene proximal promoter. Plays a role in the repression of hematopoietic precursor cell growth. Promotes IL2 deprivation-induced apoptosis in T-lymphocytes, via repression of TSC22D3/GILZ transcription and activation of the caspase cascade. May act to negatively regulate TGFB3 signaling and thereby inhibit cell death in mammary gland cells. Its function is as follows. Positively regulates cell death in response to TGFB3 during mammary gland involution. In Mus musculus (Mouse), this protein is TSC22 domain family protein 1.